The chain runs to 223 residues: Coiled-coil domain-containing protein 70 (223 aa).

A coiled-coil region spans residues 129–153; the sequence is NALWERDRNLLQEDKALWEEEKALW. Positions 199–223 are disordered; it reads EQRHQNGPYNANEEPQSTSFPRGRA. Residues 203–223 show a composition bias toward polar residues; it reads QNGPYNANEEPQSTSFPRGRA.

The chain is Coiled-coil domain-containing protein 70 from Mus musculus (Mouse).